The primary structure comprises 574 residues: MEKSTMSAVVLVLNLLVLHLQYSEVHSLANTSSEHDFGYLKFVYNAVDLELEGSYDYIIVGGGTSGCPLAATLSANYSVLVLERGTIATEYPNTLTVDGFAYNLQQQDDGKTPVERFVSEDGIDNVRSRILGGTTIINAGVYARANESFYNNSGVEWDLDLVNEAYEWVEDAIVYKPSNQSWQSITGTAFLEAGVHPDNGFGLVHEEGTRLTGSTFDNSGTRHASDELLNKGDPDNLKVAVEAAVQKIIFSTESSGLTAVGVVYTDSNGTSHRALVSGKGEVILSAGTLGTPQLLLLSGVGPESYLTSLNISVVASHPYVGQYVNDNPRNFINILPPNPIEPSTVTVLGITSDFYQCSLSSLPFDTPPFSLFPTTSYPLPNQTFAHIVSKVPGPLSAGSLTLQSSSNVSVAPNVKFNYCSDPVDLTHCVSGMKKIGVFLSTDALKPYKVDDLPGIDGFNILGTPLPENQTDDAAFEKFCRDTVASYWHYHGGAIVGKVIDGNFRVTGINALRVVDGSTFPATPASHPQGFYLMLGRYVGTKIVQERSASGEAIHTSTFKPKLMDSLKSALSFAF.

A signal peptide spans 1–27 (MEKSTMSAVVLVLNLLVLHLQYSEVHS). N-linked (GlcNAc...) asparagine glycosylation is present at Asn-30. 64–65 (TS) contacts FAD. N-linked (GlcNAc...) asparagine glycosylation is present at Asn-76. FAD contacts are provided by residues 83 to 84 (ER), Thr-134, and 138 to 141 (NAGV). Asn-146, Asn-151, and Asn-179 each carry an N-linked (GlcNAc...) asparagine glycan. Position 245 (Val-245) interacts with FAD. N-linked (GlcNAc...) asparagine glycans are attached at residues Asn-268 and Asn-310. Cys-357 is a substrate binding site. Residues Asn-381, Asn-407, and Asn-468 are each glycosylated (N-linked (GlcNAc...) asparagine). A disulfide bond links Cys-428 and Cys-479. Residue Tyr-486 coordinates substrate. FAD is bound by residues 487–488 (WH) and Gly-516. Residue His-488 is the Proton donor of the active site. The active-site Proton acceptor is His-526. An FAD-binding site is contributed by 527–528 (PQ).

The protein belongs to the GMC oxidoreductase family. In terms of assembly, monomer. It depends on FAD as a cofactor.

It localises to the vacuole. It is found in the aleurone grain. It catalyses the reaction (R)-mandelonitrile = benzaldehyde + hydrogen cyanide. Involved in cyanogenesis, the release of HCN from injured tissues. Catalyzes the stereospecific addition of HCN to a variety of aldehydes in vitro. It is a major seed constituent, and could have the additional role of a storage form for reduced nitrogen. The chain is (R)-mandelonitrile lyase 4 (MDL4) from Prunus serotina (Black cherry).